We begin with the raw amino-acid sequence, 421 residues long: Zinc metalloproteinase-disintegrin-like lachestatin-2 (421 aa).

The 197-residue stretch at 10–206 (KYVKLVLVAD…DMPQCILEKP (197 aa)) folds into the Peptidase M12B domain. 3 disulfides stabilise this stretch: Cys121-Cys201, Cys161-Cys185, and Cys163-Cys168. His146 provides a ligand contact to Zn(2+). Glu147 is a catalytic residue. Positions 150 and 156 each coordinate Zn(2+). One can recognise a Disintegrin domain in the interval 214–299 (PPVCGNYFVE…AECTDRFQRN (86 aa)). Ca(2+) contacts are provided by Val216, Asn219, Phe221, Glu223, Glu226, and Asp229. 14 cysteine pairs are disulfide-bonded: Cys217–Cys246, Cys228–Cys241, Cys230–Cys236, Cys240–Cys263, Cys254–Cys260, Cys259–Cys285, Cys272–Cys292, Cys279–Cys310, Cys303–Cys315, Cys322–Cys372, Cys337–Cys383, Cys350–Cys360, Cys367–Cys409, and Cys403–Cys414. The D/ECD-tripeptide signature appears at 278-280 (ECD). Residues Asp280, Met281, Asp283, Asp294, and Arg295 each contribute to the Ca(2+) site. The N-linked (GlcNAc...) asparagine glycan is linked to Asn312.

The protein belongs to the venom metalloproteinase (M12B) family. P-III subfamily. P-IIIc sub-subfamily. As to quaternary structure, homodimer; disulfide-linked. It depends on Zn(2+) as a cofactor. As to expression, expressed by the venom gland.

The protein resides in the secreted. Functionally, snake venom zinc metalloprotease that induces apoptosis in vascular endothelial cells (VEC), without degrading the extracellular matrix (it cannot cleave collagen) or inhibiting adhesion of VEC. Has also fibrinogenolytic and hemorrhagic activities. This is Zinc metalloproteinase-disintegrin-like lachestatin-2 from Lachesis muta rhombeata (Bushmaster).